A 559-amino-acid chain; its full sequence is Intestinal-type alkaline phosphatase (559 aa).

A signal peptide spans Met1–Ser19. Asp61 contributes to the Mg(2+) binding site. Zn(2+) contacts are provided by Asp61 and Ser111. Residue Ser111 is the Phosphoserine intermediate of the active site. Cys140 and Cys202 are oxidised to a cystine. Residue Asn141 is glycosylated (N-linked (GlcNAc...) asparagine). Ser174 provides a ligand contact to Mg(2+). Glu235 is a Ca(2+) binding site. Asn241 carries N-linked (GlcNAc...) asparagine glycosylation. The Ca(2+) site is built by Phe288, Glu289, and Asp304. Glu330 is a Mg(2+) binding site. Zn(2+) contacts are provided by Asp335, His339, Asp376, and His377. A glycan (N-linked (GlcNAc...) asparagine) is linked at Asn426. A Zn(2+)-binding site is contributed by His450. Residues Cys485 and Cys492 are joined by a disulfide bond. Residues Pro496–Arg531 are disordered. Low complexity predominate over residues Thr503–Thr524. Asn528 carries GPI-anchor amidated asparagine lipidation. The propeptide at Ser529 to Ser559 is removed in mature form.

This sequence belongs to the alkaline phosphatase family. Homodimer. The cofactor is Mg(2+). Requires Zn(2+) as cofactor. Ca(2+) is required as a cofactor. As to expression, intestine and thymus.

The protein resides in the cell membrane. It catalyses the reaction a phosphate monoester + H2O = an alcohol + phosphate. In terms of biological role, alkaline phosphatase that can hydrolyze various phosphate compounds. This Mus musculus (Mouse) protein is Intestinal-type alkaline phosphatase (Iap).